Consider the following 186-residue polypeptide: RNA polymerase sigma factor NccH (186 aa).

The short motif at 49 to 62 (DIVQDTFIAAWHAL) is the Polymerase core binding element. Positions 152-171 (HPEAAMALGTSAKAVESRVA) form a DNA-binding region, H-T-H motif.

The protein belongs to the sigma-70 factor family. ECF subfamily.

In terms of biological role, sigma factors are initiation factors that promote the attachment of RNA polymerase to specific initiation sites and are then released. This sigma factor regulates the genes for a membrane-located efflux system that confers resistance to nickel, cobalt and cadmium. This Alcaligenes xylosoxydans xylosoxydans (Achromobacter xylosoxidans) protein is RNA polymerase sigma factor NccH (nccH).